The following is a 999-amino-acid chain: Disks large-associated protein 1 (999 aa).

Disordered stretches follow at residues 155-213 (HSLE…GYWS), 395-418 (MAED…ARRA), and 918-989 (NWRP…DSIE). Residues 194 to 204 (RERCKSAEPKN) are compositionally biased toward basic and acidic residues. Composition is skewed to basic and acidic residues over residues 923 to 932 (DPPERKERRL) and 947 to 965 (LARD…EARK). The segment covering 976 to 985 (VRQNSATESA) has biased composition (polar residues). The PDZ-binding signature appears at 997–999 (TRL).

This sequence belongs to the SAPAP family.

The protein resides in the cell membrane. It localises to the postsynaptic density. The protein localises to the synapse. Part of the postsynaptic scaffold in neuronal cells. The chain is Disks large-associated protein 1 from Danio rerio (Zebrafish).